Reading from the N-terminus, the 110-residue chain is uncharacterized protein (110 aa).

2 disordered regions span residues 1–41 (MEWG…ERAQ) and 65–110 (LRQL…ASES). A coiled-coil region spans residues 38–68 (ERAQQLLDAVEQRQRQLLDTIAACEEMLRQL).

This is an uncharacterized protein from Mus musculus (Mouse).